A 200-amino-acid polypeptide reads, in one-letter code: Small ribosomal subunit protein uS4 (200 aa).

Residues 22–43 (TGKELERRPYAPGQHGPTQRKK) form a disordered region. Residues 92 to 170 (QRLDNIVYRL…VPEYVTFDAE (79 aa)) form the S4 RNA-binding domain.

This sequence belongs to the universal ribosomal protein uS4 family. Part of the 30S ribosomal subunit. Contacts protein S5. The interaction surface between S4 and S5 is involved in control of translational fidelity.

In terms of biological role, one of the primary rRNA binding proteins, it binds directly to 16S rRNA where it nucleates assembly of the body of the 30S subunit. With S5 and S12 plays an important role in translational accuracy. In Listeria monocytogenes serotype 4a (strain HCC23), this protein is Small ribosomal subunit protein uS4.